The following is a 416-amino-acid chain: D-amino acid dehydrogenase (416 aa).

3–17 (VIVLGAGIVGVTSAY) contributes to the FAD binding site.

Belongs to the DadA oxidoreductase family. Requires FAD as cofactor.

It carries out the reaction a D-alpha-amino acid + A + H2O = a 2-oxocarboxylate + AH2 + NH4(+). The protein operates within amino-acid degradation; D-alanine degradation; NH(3) and pyruvate from D-alanine: step 1/1. Its function is as follows. Oxidative deamination of D-amino acids. The polypeptide is D-amino acid dehydrogenase (Rhizobium johnstonii (strain DSM 114642 / LMG 32736 / 3841) (Rhizobium leguminosarum bv. viciae)).